A 492-amino-acid polypeptide reads, in one-letter code: MTDLHRLSIRELAEGLSQAKFSSRELTEHYLKRIAKIDPQVKSYVTVTPEQALREADAADAALKAGNATALTGIPLAHKDIFCTKGIKTTAGSKMLDNFISPYDATVVEKTKAAGLVTLGKVNMDEFAMGSTSESSYVGATSNPWALDHVPGGSSGGSAAAVAADLAPFATGTDTGGSIRQPASFCGLTGLKPTYGRVSRFGIIAYASSLDQAGPMARSAEDCAYLMNVIAGHDAKDSTSVKKELDDYVANLNNTSVKGLRIGIPKQYFNVAGLDADVKARVEESLKKLEEMGAALVEIDLNMTEAYVPTYYLIAPAEASSNLSRYDGVRYGYRCENPADLMDLYKRSRSEGFGPEVQRRILIGTYALSAGYYDAYYVKAQKVRRLIQQDFLKAFENVDVIAAPAAPTTAYKIGASLDPVEMYLGDIYTIAVNLAGLPAINAPVGFDKDNLPVGLQLIGNYWSESQLLSIVHQYQQNTDWHTKRAAIAEENA.

Active-site charge relay system residues include K79 and S154. S178 acts as the Acyl-ester intermediate in catalysis.

Belongs to the amidase family. GatA subfamily. Heterotrimer of A, B and C subunits.

The catalysed reaction is L-glutamyl-tRNA(Gln) + L-glutamine + ATP + H2O = L-glutaminyl-tRNA(Gln) + L-glutamate + ADP + phosphate + H(+). Functionally, allows the formation of correctly charged Gln-tRNA(Gln) through the transamidation of misacylated Glu-tRNA(Gln) in organisms which lack glutaminyl-tRNA synthetase. The reaction takes place in the presence of glutamine and ATP through an activated gamma-phospho-Glu-tRNA(Gln). This is Glutamyl-tRNA(Gln) amidotransferase subunit A from Acinetobacter baumannii (strain AB0057).